The chain runs to 552 residues: Phosphoribosylaminoimidazole carboxylase (552 aa).

Residues 108–295 (KQHLQVFKIA…QFEAHLRAIC (188 aa)) enclose the ATP-grasp domain. ATP is bound at residue 134–189 (GQEFGYPFVLKSKTLAYDGRGNYVVHQPSEIPTAIKALGDRPLYVEKFVPFSMEIA).

In the C-terminal section; belongs to the AIR carboxylase family. Class I subfamily.

The catalysed reaction is 5-amino-1-(5-phospho-D-ribosyl)imidazole-4-carboxylate + H(+) = 5-amino-1-(5-phospho-beta-D-ribosyl)imidazole + CO2. It participates in purine metabolism; IMP biosynthesis via de novo pathway; 5-amino-1-(5-phospho-D-ribosyl)imidazole-4-carboxylate from 5-amino-1-(5-phospho-D-ribosyl)imidazole (carboxylase route): step 1/1. This chain is Phosphoribosylaminoimidazole carboxylase (ade6), found in Schizosaccharomyces pombe (strain 972 / ATCC 24843) (Fission yeast).